The sequence spans 333 residues: Aspartate carbamoyltransferase catalytic subunit (333 aa).

Carbamoyl phosphate is bound by residues Arg-61 and Thr-62. Lys-89 is a binding site for L-aspartate. The carbamoyl phosphate site is built by Arg-111, His-144, and Gln-147. The L-aspartate site is built by Arg-184 and Arg-248. Carbamoyl phosphate contacts are provided by Gly-289 and Pro-290.

The protein belongs to the aspartate/ornithine carbamoyltransferase superfamily. ATCase family. Heterododecamer (2C3:3R2) of six catalytic PyrB chains organized as two trimers (C3), and six regulatory PyrI chains organized as three dimers (R2).

It catalyses the reaction carbamoyl phosphate + L-aspartate = N-carbamoyl-L-aspartate + phosphate + H(+). Its pathway is pyrimidine metabolism; UMP biosynthesis via de novo pathway; (S)-dihydroorotate from bicarbonate: step 2/3. In terms of biological role, catalyzes the condensation of carbamoyl phosphate and aspartate to form carbamoyl aspartate and inorganic phosphate, the committed step in the de novo pyrimidine nucleotide biosynthesis pathway. The chain is Aspartate carbamoyltransferase catalytic subunit from Trichormus variabilis (strain ATCC 29413 / PCC 7937) (Anabaena variabilis).